A 412-amino-acid polypeptide reads, in one-letter code: Maltoporin (412 aa).

The N-terminal stretch at Met1–Ala22 is a signal peptide.

The protein belongs to the porin LamB (TC 1.B.3) family. Homotrimer formed of three 18-stranded antiparallel beta-barrels, containing three independent channels.

The protein localises to the cell outer membrane. The enzyme catalyses beta-maltose(in) = beta-maltose(out). Functionally, involved in the transport of maltose and maltodextrins. The chain is Maltoporin from Vibrio cholerae serotype O1 (strain ATCC 39315 / El Tor Inaba N16961).